The following is a 273-amino-acid chain: Ribosomal RNA small subunit methyltransferase A (273 aa).

S-adenosyl-L-methionine contacts are provided by Asn18, Leu20, Gly45, Glu66, Asp91, and Asn113.

Belongs to the class I-like SAM-binding methyltransferase superfamily. rRNA adenine N(6)-methyltransferase family. RsmA subfamily.

The protein resides in the cytoplasm. It catalyses the reaction adenosine(1518)/adenosine(1519) in 16S rRNA + 4 S-adenosyl-L-methionine = N(6)-dimethyladenosine(1518)/N(6)-dimethyladenosine(1519) in 16S rRNA + 4 S-adenosyl-L-homocysteine + 4 H(+). Functionally, specifically dimethylates two adjacent adenosines (A1518 and A1519) in the loop of a conserved hairpin near the 3'-end of 16S rRNA in the 30S particle. May play a critical role in biogenesis of 30S subunits. This is Ribosomal RNA small subunit methyltransferase A from Enterobacter sp. (strain 638).